Reading from the N-terminus, the 127-residue chain is Aspartate 1-decarboxylase (127 aa).

Ser25 serves as the catalytic Schiff-base intermediate with substrate; via pyruvic acid. Pyruvic acid (Ser) is present on Ser25. Thr57 is a substrate binding site. Tyr58 functions as the Proton donor in the catalytic mechanism. 73-75 provides a ligand contact to substrate; it reads GAA.

It belongs to the PanD family. As to quaternary structure, heterooctamer of four alpha and four beta subunits. Pyruvate serves as cofactor. Is synthesized initially as an inactive proenzyme, which is activated by self-cleavage at a specific serine bond to produce a beta-subunit with a hydroxyl group at its C-terminus and an alpha-subunit with a pyruvoyl group at its N-terminus.

Its subcellular location is the cytoplasm. The enzyme catalyses L-aspartate + H(+) = beta-alanine + CO2. It participates in cofactor biosynthesis; (R)-pantothenate biosynthesis; beta-alanine from L-aspartate: step 1/1. Its function is as follows. Catalyzes the pyruvoyl-dependent decarboxylation of aspartate to produce beta-alanine. In Clostridium kluyveri (strain NBRC 12016), this protein is Aspartate 1-decarboxylase.